A 536-amino-acid polypeptide reads, in one-letter code: Glycine-rich extracellular protein 1 (536 aa).

Residues 1–22 form the signal peptide; it reads MGAWAFPAALFLLCLTSESLQG. 3 disordered regions span residues 111 to 134, 306 to 336, and 500 to 536; these read AQNG…TTQN, GAGE…NGPW, and GDEY…LGKC. Positions 115–124 are enriched in gly residues; that stretch reads FGPGFGGGGK. Positions 521–536 are enriched in gly residues; it reads GQLGNGYGGRCPLGKC.

The polypeptide is Glycine-rich extracellular protein 1 (Homo sapiens (Human)).